The chain runs to 115 residues: MVNIYNDINALEATFRKTPEFEALQAAVEVVKSDEEALNVFKNFRKIQIELQKKQLAGEELLEDELVYAQKASQLVQQNEKISAMLEAEMKLSKVIEEVNRILIKPIQGLYEDIQ.

The protein belongs to the UPF0342 family.

In Lysinibacillus sphaericus (strain C3-41), this protein is UPF0342 protein Bsph_0375.